Reading from the N-terminus, the 94-residue chain is Cell division protein FtsB (94 aa).

Residues 1-3 are Cytoplasmic-facing; it reads MRW. The chain crosses the membrane as a helical span at residues 4–21; the sequence is LTVGLLAAIGLLQYPLWV. Over 22 to 94 the chain is Periplasmic; sequence GKGGWLKVWE…VQIPEKVPGK (73 aa). Residues 31–73 are a coiled coil; the sequence is EYDRQLQQQKEVTRKLEIRNAGLDAEVRDLKQGYDAIEERARF.

The protein belongs to the FtsB family. In terms of assembly, part of a complex composed of FtsB, FtsL and FtsQ.

It localises to the cell inner membrane. In terms of biological role, essential cell division protein. May link together the upstream cell division proteins, which are predominantly cytoplasmic, with the downstream cell division proteins, which are predominantly periplasmic. The sequence is that of Cell division protein FtsB from Dechloromonas aromatica (strain RCB).